A 303-amino-acid polypeptide reads, in one-letter code: Porphobilinogen deaminase (303 aa).

S-(dipyrrolylmethanemethyl)cysteine is present on cysteine 240.

This sequence belongs to the HMBS family. As to quaternary structure, monomer. It depends on dipyrromethane as a cofactor.

It carries out the reaction 4 porphobilinogen + H2O = hydroxymethylbilane + 4 NH4(+). It participates in porphyrin-containing compound metabolism; protoporphyrin-IX biosynthesis; coproporphyrinogen-III from 5-aminolevulinate: step 2/4. Tetrapolymerization of the monopyrrole PBG into the hydroxymethylbilane pre-uroporphyrinogen in several discrete steps. This Stenotrophomonas maltophilia (strain R551-3) protein is Porphobilinogen deaminase.